Here is a 343-residue protein sequence, read N- to C-terminus: Endoglucanase C (343 aa).

The Proton donor role is filled by Glu140. The active-site Nucleophile is Glu280.

It belongs to the glycosyl hydrolase 5 (cellulase A) family.

It carries out the reaction Endohydrolysis of (1-&gt;4)-beta-D-glucosidic linkages in cellulose, lichenin and cereal beta-D-glucans.. Its pathway is glycan metabolism; cellulose degradation. This enzyme catalyzes the endohydrolysis of 1,4-beta-glucosidic linkages in cellulose, lichenin and cereal beta-D-glucans. The sequence is that of Endoglucanase C (celC) from Acetivibrio thermocellus (Hungateiclostridium thermocellum).